Consider the following 210-residue polypeptide: Troponin I, cardiac muscle (210 aa).

The interval 1–43 (MADGSSDAAREPRPAPAPIRRRSSNYRAYATEPHAKKKSKISA) is disordered. At Ala-2 the chain carries N-acetylalanine. 2 positions are modified to phosphoserine: Ser-5 and Ser-6. 2 positions are modified to phosphoserine; by PKA and PKD/PRKD1: Ser-23 and Ser-24. Tyr-26 bears the Phosphotyrosine mark. Thr-31 carries the phosphothreonine; by STK4/MST1 modification. The tract at residues 32–79 (EPHAKKKSKISASRKLQLKTLLLQIAKQELEREAEERRGEKGRALSTR) is involved in binding TNC. Ser-42 and Ser-44 each carry phosphoserine; by PKC/PRKCE. Thr-51 is modified (phosphothreonine; by STK4/MST1). Ser-77 carries the phosphoserine modification. Thr-78 carries the phosphothreonine modification. A phosphothreonine; by STK4/MST1 mark is found at Thr-129 and Thr-143. An involved in binding TNC and actin region spans residues 129–149 (TQKIFDLRGKFKRPTLRRVRI). The residue at position 150 (Ser-150) is a Phosphoserine; by PAK3. A Phosphoserine modification is found at Ser-166. Thr-181 bears the Phosphothreonine mark. Residue Ser-199 is modified to Phosphoserine.

The protein belongs to the troponin I family. In terms of assembly, binds to actin and tropomyosin. Interacts with TRIM63. Interacts with STK4/MST1. Post-translationally, phosphorylated at Ser-42 and Ser-44 by PRKCE; phosphorylation increases myocardium contractile dysfunction. Phosphorylated at Ser-23 and Ser-24 by PRKD1; phosphorylation reduces myofilament calcium sensitivity. Phosphorylated preferentially at Thr-31. Phosphorylation by STK4/MST1 alters its binding affinity to TNNC1 (cardiac Tn-C) and TNNT2 (cardiac Tn-T).

Troponin I is the inhibitory subunit of troponin, the thin filament regulatory complex which confers calcium-sensitivity to striated muscle actomyosin ATPase activity. This Homo sapiens (Human) protein is Troponin I, cardiac muscle (TNNI3).